Reading from the N-terminus, the 89-residue chain is Small ribosomal subunit protein uS15 (89 aa).

The protein belongs to the universal ribosomal protein uS15 family. In terms of assembly, part of the 30S ribosomal subunit. Forms a bridge to the 50S subunit in the 70S ribosome, contacting the 23S rRNA.

Functionally, one of the primary rRNA binding proteins, it binds directly to 16S rRNA where it helps nucleate assembly of the platform of the 30S subunit by binding and bridging several RNA helices of the 16S rRNA. Forms an intersubunit bridge (bridge B4) with the 23S rRNA of the 50S subunit in the ribosome. This chain is Small ribosomal subunit protein uS15, found in Bartonella bacilliformis (strain ATCC 35685 / KC583 / Herrer 020/F12,63).